Consider the following 262-residue polypeptide: Hydroxyethylthiazole kinase (262 aa).

Met50 contacts substrate. Residues Arg125 and Thr171 each coordinate ATP. Residue Gly198 coordinates substrate.

It belongs to the Thz kinase family. The cofactor is Mg(2+).

It catalyses the reaction 5-(2-hydroxyethyl)-4-methylthiazole + ATP = 4-methyl-5-(2-phosphooxyethyl)-thiazole + ADP + H(+). It functions in the pathway cofactor biosynthesis; thiamine diphosphate biosynthesis; 4-methyl-5-(2-phosphoethyl)-thiazole from 5-(2-hydroxyethyl)-4-methylthiazole: step 1/1. Catalyzes the phosphorylation of the hydroxyl group of 4-methyl-5-beta-hydroxyethylthiazole (THZ). This chain is Hydroxyethylthiazole kinase, found in Escherichia coli (strain K12 / MC4100 / BW2952).